The sequence spans 595 residues: DNA primase (595 aa).

The CHC2-type zinc-finger motif lies at 38–62; it reads CPFHQEKTPSFTVSDSKRFFYCFGC. The Toprim domain maps to 250–332; the sequence is NHSILVEGYF…EKKISFIRLP (83 aa). 3 residues coordinate Mg(2+): E256, D300, and D302.

Belongs to the DnaG primase family. Monomer. Interacts with DnaB. Zn(2+) is required as a cofactor. The cofactor is Mg(2+).

It catalyses the reaction ssDNA + n NTP = ssDNA/pppN(pN)n-1 hybrid + (n-1) diphosphate.. Its function is as follows. RNA polymerase that catalyzes the synthesis of short RNA molecules used as primers for DNA polymerase during DNA replication. The chain is DNA primase from Rickettsia felis (strain ATCC VR-1525 / URRWXCal2) (Rickettsia azadi).